The chain runs to 407 residues: Pyridinium-3,5-bisthiocarboxylic acid mononucleotide nickel insertion protein (407 aa).

Belongs to the LarC family.

It catalyses the reaction Ni(II)-pyridinium-3,5-bisthiocarboxylate mononucleotide = pyridinium-3,5-bisthiocarboxylate mononucleotide + Ni(2+). In terms of biological role, involved in the biosynthesis of a nickel-pincer cofactor ((SCS)Ni(II) pincer complex). Binds Ni(2+), and functions in nickel delivery to pyridinium-3,5-bisthiocarboxylic acid mononucleotide (P2TMN), to form the mature cofactor. Is thus probably required for the activation of nickel-pincer cofactor-dependent enzymes. This is Pyridinium-3,5-bisthiocarboxylic acid mononucleotide nickel insertion protein from Acetivibrio thermocellus (strain ATCC 27405 / DSM 1237 / JCM 9322 / NBRC 103400 / NCIMB 10682 / NRRL B-4536 / VPI 7372) (Clostridium thermocellum).